Here is a 401-residue protein sequence, read N- to C-terminus: Pectate lyase (401 aa).

The first 20 residues, 1–20 (MATTILPLILFISSLAIASS), serve as a signal peptide directing secretion. Residue N38 is glycosylated (N-linked (GlcNAc...) asparagine). Ca(2+) is bound by residues D199, D223, and D227. R279 is a catalytic residue.

It belongs to the polysaccharide lyase 1 family. The cofactor is Ca(2+). Expressed in sites of vascular differentiation and in new primordia on the flank of the shoot meristem.

It catalyses the reaction Eliminative cleavage of (1-&gt;4)-alpha-D-galacturonan to give oligosaccharides with 4-deoxy-alpha-D-galact-4-enuronosyl groups at their non-reducing ends.. Its pathway is glycan metabolism; pectin degradation; 2-dehydro-3-deoxy-D-gluconate from pectin: step 2/5. Involved in the degradation of pectin. May assist in the removal and modification of an existing pectin matrix in order to allow the deposition of newly synthesized walls polymers for a specialized function or to create an architecture that is extensible. This Zinnia elegans (Garden zinnia) protein is Pectate lyase.